Consider the following 211-residue polypeptide: Thymidylate kinase (211 aa).

7 to 14 contacts ATP; that stretch reads GIDGCGKT.

Belongs to the thymidylate kinase family.

It carries out the reaction dTMP + ATP = dTDP + ADP. Phosphorylation of dTMP to form dTDP in both de novo and salvage pathways of dTTP synthesis. In Anaplasma marginale (strain Florida), this protein is Thymidylate kinase.